Consider the following 110-residue polypeptide: Nodulation protein NolE (110 aa).

The signal sequence occupies residues 1–25 (MKVTGYYVIVAALLALALRAGPSLA). A disordered region spans residues 27–64 (DDRNQDCGPATSDPRANLNGADKAHSAEHTQDFNCQDT). Residues 48–57 (DKAHSAEHTQ) show a composition bias toward basic and acidic residues.

It localises to the periplasm. The polypeptide is Nodulation protein NolE (nolE) (Rhizobium leguminosarum bv. phaseoli).